Reading from the N-terminus, the 237-residue chain is Golgi anti-apoptotic protein (237 aa).

Residues 1–37 lie on the Cytoplasmic side of the membrane; sequence MAMPSLSACSSIEDDFNYGSSVASASVHIRMAFLRKV. The helical transmembrane segment at 38 to 58 threads the bilayer; that stretch reads YGILCLQFLLTTATTAVFLYF. The Lumenal segment spans residues 59–67; the sequence is DCMRTFIQG. The chain crosses the membrane as a helical span at residues 68–88; sequence SPVLILASMFGSIGLIFALTL. Over 89–94 the chain is Cytoplasmic; that stretch reads HRHKHP. A helical membrane pass occupies residues 95–115; it reads LNLYLLCGFTLSESLTLASVV. Residue Thr116 is a topological domain, lumenal. A helical membrane pass occupies residues 117-137; the sequence is FYDVHVVMQAFMLTTAAFLAL. At 138-151 the chain is on the cytoplasmic side; the sequence is TTYTLQSKRDFSKL. The chain crosses the membrane as a helical span at residues 152–172; the sequence is GAGLFAALWILILSGLLGIFV. At 173 to 174 the chain is on the lumenal side; that stretch reads QN. The helical transmembrane segment at 175 to 195 threads the bilayer; sequence ETVKLVLSAFGALVFCGFIIY. Topologically, residues 196 to 209 are cytoplasmic; that stretch reads DTHSLIHKLSPEEY. The helical intramembrane region spans 210-230; the sequence is VLASINLYLDIINLFLHLLQL. The Cytoplasmic segment spans residues 231–237; it reads LEVSNKK.

The protein belongs to the BI1 family. LFG subfamily.

It localises to the host Golgi apparatus membrane. May affect virulence through inhibition of apoptosis. This is Golgi anti-apoptotic protein (L6) from Vaccinia virus (strain LC16m0) (VACV).